We begin with the raw amino-acid sequence, 234 residues long: Leucyl/phenylalanyl-tRNA--protein transferase (234 aa).

This sequence belongs to the L/F-transferase family.

Its subcellular location is the cytoplasm. The enzyme catalyses N-terminal L-lysyl-[protein] + L-leucyl-tRNA(Leu) = N-terminal L-leucyl-L-lysyl-[protein] + tRNA(Leu) + H(+). It catalyses the reaction N-terminal L-arginyl-[protein] + L-leucyl-tRNA(Leu) = N-terminal L-leucyl-L-arginyl-[protein] + tRNA(Leu) + H(+). It carries out the reaction L-phenylalanyl-tRNA(Phe) + an N-terminal L-alpha-aminoacyl-[protein] = an N-terminal L-phenylalanyl-L-alpha-aminoacyl-[protein] + tRNA(Phe). Functions in the N-end rule pathway of protein degradation where it conjugates Leu, Phe and, less efficiently, Met from aminoacyl-tRNAs to the N-termini of proteins containing an N-terminal arginine or lysine. The chain is Leucyl/phenylalanyl-tRNA--protein transferase from Salmonella gallinarum (strain 287/91 / NCTC 13346).